The chain runs to 690 residues: MPRDFSLDKVRNIGIMAHIDAGKTTTTERILFYTGKTHKLGEVHEGTATMDWMVQEQERGITITSAATTCYWKGHKINIIDTPGHVDFTVEVERSLRILDGAVAVFSAKEGVEPQSETVWRQADKYHVPRIAYVNKMDVIGADFFNVIDMIRERLGANPVAIQIPIGKEDTFRGIVDLIKMEAIIYKDDLGTVMDETEIPEDLKPLAEEYREKLLEAIAEVDETIMEKYLEGEEITEEEIHAALRKGTINGELVPVVCGSSYKNKGVQPLLDAIVNYLPSPLDLPPVKGMSIDGGEELERKPDDNEPFSALAFKIMADPYVGKLAFFRVYSGTLKAGSYVLNSTKGKKERIGRILRMHANHREEIDAVYTGDIAAAVGLKDTTTGDTLCDENHPILLESMDFPEPVISVAIEPKTKAAQEKMSIALSKLAEEDPTFKTYTDQETGQTIIAGMGELHLEIIVDRLRREFNVECNVGKPQVAYKETITKPVRVEGKFIRQSGGRGQYGHVWLEMEPAPRGEGYIFENRIVGGVIPKEFIPAVDAGIQEAMQNGVLGGYPVIDVKVALVDGSYHEVDSSDMAFKIAGSIAFREGMKKADPVLLEPIMKVEVVVPEEYMGDVIGDLNARRGKVEGMETRSGARVIRAFVPLAEMFGYATDLRSKTQGRGTYTMQFHHYEEVPKNIAEQILSAKK.

The tr-type G domain occupies 8–282; that stretch reads DKVRNIGIMA…AIVNYLPSPL (275 aa). Residues 17-24, 81-85, and 135-138 contribute to the GTP site; these read AHIDAGKT, DTPGH, and NKMD.

Belongs to the TRAFAC class translation factor GTPase superfamily. Classic translation factor GTPase family. EF-G/EF-2 subfamily.

It localises to the cytoplasm. Functionally, catalyzes the GTP-dependent ribosomal translocation step during translation elongation. During this step, the ribosome changes from the pre-translocational (PRE) to the post-translocational (POST) state as the newly formed A-site-bound peptidyl-tRNA and P-site-bound deacylated tRNA move to the P and E sites, respectively. Catalyzes the coordinated movement of the two tRNA molecules, the mRNA and conformational changes in the ribosome. The chain is Elongation factor G from Caldanaerobacter subterraneus subsp. tengcongensis (strain DSM 15242 / JCM 11007 / NBRC 100824 / MB4) (Thermoanaerobacter tengcongensis).